Consider the following 161-residue polypeptide: uncharacterized protein (161 aa).

This is an uncharacterized protein from Mycoplasma (Bacteriophage L2).